The sequence spans 270 residues: 2-heptyl-3-hydroxy-4-quinolone dioxygenase AqdC2 (270 aa).

The AB hydrolase-1 domain maps to 25 to 156 (PALVLLTGWG…KSARAGLAKS (132 aa)). Histidine 99 lines the substrate pocket. Histidine 248 (proton donor/acceptor) is an active-site residue.

This sequence belongs to the AB hydrolase superfamily.

It carries out the reaction 2-heptyl-3-hydroxy-4(1H)-quinolone + O2 = N-octanoylanthranilate + CO + H(+). In terms of biological role, involved in the degradation of the Pseudomonas aeruginosa quorum sensing signal molecules HHQ (2-heptyl-4-quinolone) and PQS (2-heptyl-3-hydroxy-4-quinolone) to anthranilic acid. Catalyzes the cleavage of PQS to form N-octanoylanthranilic acid and carbon monoxide. In Rhodococcus erythropolis (Arthrobacter picolinophilus), this protein is 2-heptyl-3-hydroxy-4-quinolone dioxygenase AqdC2.